The following is a 533-amino-acid chain: Early growth response protein 1 (533 aa).

Disordered stretches follow at residues 1–94 (MAAA…EQPY) and 161–237 (MTNP…PPPA). The segment covering 68–77 (SGGGGGGGSN) has biased composition (gly residues). The segment covering 164 to 189 (PPTSSSSAPSPAASSSSSASQSPPLS) has biased composition (low complexity). A Glycyl lysine isopeptide (Lys-Gly) (interchain with G-Cter in SUMO2) cross-link involves residue Lys303. Residues 316–336 (PSRMRKYPNRPSKTPPHERPY) are disordered. C2H2-type zinc fingers lie at residues 336–360 (YACP…IRIH), 366–388 (FQCR…IRTH), and 394–416 (FACD…TKIH). A disordered region spans residues 407–478 (DERKRHTKIH…SSTYPSPAHS (72 aa)). Over residues 411-421 (RHTKIHLRQKD) the composition is skewed to basic residues. A compositionally biased stretch (low complexity) spans 427–475 (SVVASPAASSLSSYPSPVATSYPSPATTSFPSPVPTSYSSPGSSTYPSP).

Belongs to the EGR C2H2-type zinc-finger protein family. In terms of assembly, interacts with SNAI1 and SP1 upon 12-O-tetradecanoylphorbol-13-acetate (TPA) induction. As to expression, detected in lung vasculature and in mononuclear phagocytes. Detected in liver (at protein level). Expressed in the liver in a circadian manner.

Its subcellular location is the nucleus. The protein resides in the cytoplasm. Functionally, transcriptional regulator. Recognizes and binds to the DNA sequence 5'-GCG(T/G)GGGCG-3'(EGR-site) in the promoter region of target genes. Binds double-stranded target DNA, irrespective of the cytosine methylation status. Regulates the transcription of numerous target genes, and thereby plays an important role in regulating the response to growth factors, DNA damage, and ischemia. Plays a role in the regulation of cell survival, proliferation and cell death. Activates expression of p53/TP53 and TGFB1, and thereby helps prevent tumor formation. Required for normal progress through mitosis and normal proliferation of hepatocytes after partial hepatectomy. Mediates responses to ischemia and hypoxia; regulates the expression of proteins such as IL1B and CXCL2 that are involved in inflammatory processes and development of tissue damage after ischemia. Regulates biosynthesis of luteinizing hormone (LHB) in the pituitary. Regulates the amplitude of the expression rhythms of clock genes: BMAL1, PER2 and NR1D1 in the liver via the activation of PER1 (clock repressor) transcription. Regulates the rhythmic expression of core-clock gene BMAL1 in the suprachiasmatic nucleus (SCN). The polypeptide is Early growth response protein 1 (Egr1) (Mus musculus (Mouse)).